The sequence spans 510 residues: Cytochrome P450 90D2 (510 aa).

Residues 6–26 (MVGSGGVYSWPAALLVAAIVV) form a helical membrane-spanning segment. Heme is bound at residue C444.

Belongs to the cytochrome P450 family. It depends on heme as a cofactor.

The protein localises to the membrane. It catalyses the reaction 3-epi-6-deoxocathasterone + reduced [NADPH--hemoprotein reductase] + O2 = 6-deoxotyphasterol + oxidized [NADPH--hemoprotein reductase] + H2O + H(+). The enzyme catalyses (22S,24R)-22-hydroxy-5alpha-ergostan-3-one + reduced [NADPH--hemoprotein reductase] + O2 = 3-dehydro-6-deoxoteasterone + oxidized [NADPH--hemoprotein reductase] + H2O + H(+). It carries out the reaction 6-deoxycathasterone + reduced [NADPH--hemoprotein reductase] + O2 = 6-deoxoteasterone + oxidized [NADPH--hemoprotein reductase] + H2O + H(+). It participates in plant hormone biosynthesis; brassinosteroid biosynthesis. In terms of biological role, involved in reduction steps of the biosynthesis of plant campesterol-derivative steroids, ending to castasterone (CS) but missing brassinolide (BL). Catalyzes the conversion of (22S,24R)-22-hydroxy-5alpha-ergostan-3-one (22-hydroxy-campesta-3-one, 22-OH-3-one) to 3-dehydro-6-deoxoteasterone (6-deoxo3DT, 6-deoxo-3-DHT), 3-epi-6-deoxocathasterone (3-epi-6-deoxoCT) to 6-deoxotyphasterol (6-deoxoTY) and of 6-deoxocathasterone (6-deoxoCT) to 6-deoxoteasterone (6-deoxoTE). The sequence is that of Cytochrome P450 90D2 from Brachypodium distachyon (Purple false brome).